The chain runs to 197 residues: Nucleoid occlusion factor SlmA (197 aa).

The HTH tetR-type domain occupies Ile7 to Leu67. Positions Thr30–Phe49 form a DNA-binding region, H-T-H motif.

The protein belongs to the nucleoid occlusion factor SlmA family. In terms of assembly, homodimer. Interacts with FtsZ.

The protein localises to the cytoplasm. It localises to the nucleoid. Its function is as follows. Required for nucleoid occlusion (NO) phenomenon, which prevents Z-ring formation and cell division over the nucleoid. Acts as a DNA-associated cell division inhibitor that binds simultaneously chromosomal DNA and FtsZ, and disrupts the assembly of FtsZ polymers. SlmA-DNA-binding sequences (SBS) are dispersed on non-Ter regions of the chromosome, preventing FtsZ polymerization at these regions. This chain is Nucleoid occlusion factor SlmA, found in Shewanella woodyi (strain ATCC 51908 / MS32).